The chain runs to 673 residues: tRNA uridine 5-carboxymethylaminomethyl modification enzyme MnmG (673 aa).

17–22 contacts FAD; it reads GGGHAG. Residue 284–298 participates in NAD(+) binding; it reads GPRYCPSVEDKINRF.

Belongs to the MnmG family. As to quaternary structure, homodimer. Heterotetramer of two MnmE and two MnmG subunits. FAD serves as cofactor.

It is found in the cytoplasm. Its function is as follows. NAD-binding protein involved in the addition of a carboxymethylaminomethyl (cmnm) group at the wobble position (U34) of certain tRNAs, forming tRNA-cmnm(5)s(2)U34. This is tRNA uridine 5-carboxymethylaminomethyl modification enzyme MnmG from Polaromonas sp. (strain JS666 / ATCC BAA-500).